The chain runs to 31 residues: DTIPCGESCVWIPCISSILGCSCKDKVCYHN.

The cyclopeptide (Asp-Asn) cross-link spans 1–31 (DTIPCGESCVWIPCISSILGCSCKDKVCYHN). Intrachain disulfides connect cysteine 5-cysteine 21, cysteine 9-cysteine 23, and cysteine 14-cysteine 28.

Post-translationally, contains 3 disulfide bonds. This is a cyclic peptide. As to expression, expressed in seed but not in root nodules.

Functionally, probably participates in a plant defense mechanism. Not active against Gram-negative bacterium E.coli ATCC 700926 or Gram-positive bacterium S.aureus ATCC 12600 up to a concentration of 100 uM under low-salt conditions. This is Cliotide T14 from Clitoria ternatea (Butterfly pea).